The sequence spans 1409 residues: CRISPR-associated endonuclease Cas9 (1409 aa).

Aspartate 31 serves as the catalytic For RuvC-like nuclease domain. 3 residues coordinate Mg(2+): aspartate 31, glutamate 784, and glutamate 788. The HNH Cas9-type domain maps to 792-949 (TNQGKSNSQQ…DKAGFIQRQL (158 aa)). Histidine 868 (proton acceptor for HNH nuclease domain) is an active-site residue. Residue histidine 1011 participates in Mg(2+) binding. Over residues 1121-1130 (EQNHGLDRGK) the composition is skewed to basic and acidic residues. The tract at residues 1121–1151 (EQNHGLDRGKPKGLFNANLSSKPKPNSNENL) is disordered. Residues 1137–1150 (ANLSSKPKPNSNEN) show a composition bias toward polar residues.

The protein belongs to the CRISPR-associated protein Cas9 family. Subtype II-A subfamily. As to quaternary structure, monomer. Binds crRNA and tracrRNA. The cofactor is Mg(2+).

Its activity is regulated as follows. Only has nuclease activity when bound to both gRNAs (crRNA plus tracrRNA). Functionally, CRISPR (clustered regularly interspaced short palindromic repeat) is an adaptive immune system that provides protection against mobile genetic elements (viruses, transposable elements and conjugative plasmids). CRISPR clusters contain spacers, sequences complementary to antecedent mobile elements, and target invading nucleic acids. CRISPR clusters are transcribed and processed into CRISPR RNA (crRNA). In type II CRISPR systems correct processing of pre-crRNA requires a trans-encoded small RNA (tracrRNA), endogenous ribonuclease 3 (rnc) and Cas9. The tracrRNA serves as a guide for ribonuclease 3-aided processing of pre-crRNA. Cas9/crRNA/tracrRNA endonucleolytically cleaves linear or circular dsDNA target complementary to the spacer yielding blunt ends; Cas9 is inactive in the absence of the 2 guide RNAs (gRNA). Cas9 recognizes a 3'-G-rich protospacer adjacent motif (PAM, TGGTG in this organism) in the CRISPR repeat sequences to help distinguish self versus nonself, as targets within the bacterial CRISPR locus do not have PAMs. PAM recognition is also required for catalytic activity. When the CRISPR3/cas system consisting of cas9-cas1-cas2-csn2-CRISPR3 or just cas9-CRISPR3 is expressed in E.coli it prevents plasmids homologous to spacers 1 or 2 from transforming. In Streptococcus thermophilus, this protein is CRISPR-associated endonuclease Cas9.